The sequence spans 271 residues: Pyrroline-5-carboxylate reductase (271 aa).

Belongs to the pyrroline-5-carboxylate reductase family.

The protein localises to the cytoplasm. It catalyses the reaction L-proline + NADP(+) = (S)-1-pyrroline-5-carboxylate + NADPH + 2 H(+). The enzyme catalyses L-proline + NAD(+) = (S)-1-pyrroline-5-carboxylate + NADH + 2 H(+). The protein operates within amino-acid biosynthesis; L-proline biosynthesis; L-proline from L-glutamate 5-semialdehyde: step 1/1. Its function is as follows. Catalyzes the reduction of 1-pyrroline-5-carboxylate (PCA) to L-proline. The sequence is that of Pyrroline-5-carboxylate reductase from Staphylococcus aureus (strain COL).